The sequence spans 81 residues: Styelin-D (81 aa).

An N-terminal signal peptide occupies residues 1–22 (MQMKATILIVLVALFMIQQSEA). Position 24 is a 6'-bromotryptophan (W24). The residue at position 26 (R26) is a 3,4-dihydroxyarginine. Residues K27, K30, and K34 each carry the 4,5-dihydroxylysine modification. A 3',4'-dihydroxyphenylalanine mark is found at Y36 and Y37. K38 carries the post-translational modification 4,5-dihydroxylysine. The residue at position 40 (K40) is a 5-hydroxylysine. 2 positions are modified to 3',4'-dihydroxyphenylalanine: Y41 and Y42. K44 is modified (5-hydroxylysine). L54 is subject to Leucine amide. The propeptide at 56–81 (DMTDEEFQDFMKEVEQAREEELQSRQ) is removed in mature form.

Post-translationally, contains L-DOPA (3',4'-dihydroxyphenylalanine). Hemocytes and pharyngeal tissues.

Its subcellular location is the secreted. Bactericidal against several Gram-positive and Gram-negative bacteria. Plays a significant role in the innate immune mechanisms of S.clava. The chain is Styelin-D from Styela clava (Sea squirt).